Consider the following 349-residue polypeptide: Glycosyltransferase 8 domain-containing protein 2 (349 aa).

The Cytoplasmic segment spans residues 1-6; it reads MAFLRK. Residues 7-24 traverse the membrane as a helical; Signal-anchor for type II membrane protein segment; the sequence is VNQVLLLLLVLTLCGILY. At 25-349 the chain is on the lumenal side; that stretch reads KKVHKGAVLK…AGIFKLHHNR (325 aa). N-linked (GlcNAc...) asparagine glycosylation is present at Asn234.

The protein belongs to the glycosyltransferase 8 family.

The protein resides in the membrane. In Mus musculus (Mouse), this protein is Glycosyltransferase 8 domain-containing protein 2 (Glt8d2).